The following is a 616-amino-acid chain: ATP-dependent zinc metalloprotease FtsH 3 (616 aa).

The Cytoplasmic portion of the chain corresponds to 1-9 (MSKNNKKWR). Residues 10–30 (NAGLYALLLIVVLALASAFFD) form a helical membrane-spanning segment. Over 31–108 (RPTQTRETLS…VQPQSDEGFW (78 aa)) the chain is Lumenal. Residues 109–129 (FRIASTLFLPILLLVGIFFLF) traverse the membrane as a helical segment. Topologically, residues 130–616 (RRAQSGPGSQ…NNNAKLALLV (487 aa)) are cytoplasmic. 201-208 (GPPGTGKT) contacts ATP. H423 contributes to the Zn(2+) binding site. The active site involves E424. Positions 427 and 504 each coordinate Zn(2+).

The protein in the central section; belongs to the AAA ATPase family. It in the C-terminal section; belongs to the peptidase M41 family. In terms of assembly, homohexamer (Potential). Part of a large complex that includes FtsH2 and PSII. Coimmunoprecipitates with YidC. It depends on Zn(2+) as a cofactor.

The protein localises to the cellular thylakoid membrane. Acts as a processive, ATP-dependent zinc metallopeptidase for both cytoplasmic and membrane proteins. Plays a role in the quality control of integral membrane proteins. The chain is ATP-dependent zinc metalloprotease FtsH 3 from Synechocystis sp. (strain ATCC 27184 / PCC 6803 / Kazusa).